Consider the following 755-residue polypeptide: Catalase-peroxidase (755 aa).

Positions 93-241 (WHSAGTYRVF…LAAAHMGLIY (149 aa)) form a cross-link, tryptophyl-tyrosyl-methioninium (Trp-Tyr) (with M-267). The active-site Proton acceptor is the His94. Residues 241–267 (YVNPEGPDGNPDPVAAARDIRVTFGRM) constitute a cross-link (tryptophyl-tyrosyl-methioninium (Tyr-Met) (with W-93)). Residue His282 participates in heme b binding.

This sequence belongs to the peroxidase family. Peroxidase/catalase subfamily. Homodimer or homotetramer. It depends on heme b as a cofactor. In terms of processing, formation of the three residue Trp-Tyr-Met cross-link is important for the catalase, but not the peroxidase activity of the enzyme.

Its subcellular location is the cytoplasm. It carries out the reaction H2O2 + AH2 = A + 2 H2O. The catalysed reaction is 2 H2O2 = O2 + 2 H2O. Functionally, bifunctional enzyme with both catalase and broad-spectrum peroxidase activity. The protein is Catalase-peroxidase of Podospora anserina (strain S / ATCC MYA-4624 / DSM 980 / FGSC 10383) (Pleurage anserina).